A 54-amino-acid chain; its full sequence is Large ribosomal subunit protein eL37 (54 aa).

Residues Cys-20, Cys-23, Cys-35, and Cys-38 each contribute to the Zn(2+) site. Residues 20–38 form a C4-type zinc finger; that stretch reads CRRCGHHTYNVRTKRCSHC.

It belongs to the eukaryotic ribosomal protein eL37 family. The cofactor is Zn(2+).

Functionally, binds to the 23S rRNA. This is Large ribosomal subunit protein eL37 (rpl37e) from Thermoplasma volcanium (strain ATCC 51530 / DSM 4299 / JCM 9571 / NBRC 15438 / GSS1).